The primary structure comprises 148 residues: Small ribosomal subunit protein eS6 (148 aa).

This sequence belongs to the eukaryotic ribosomal protein eS6 family.

The polypeptide is Small ribosomal subunit protein eS6 (Pyrobaculum islandicum (strain DSM 4184 / JCM 9189 / GEO3)).